The following is a 61-amino-acid chain: Sec-independent protein translocase protein TatA (61 aa).

Residues 1–21 (MFGIGMPEMLIILVIILIIFG) traverse the membrane as a helical segment.

It belongs to the TatA/E family. In terms of assembly, the Tat system comprises two distinct complexes: a TatABC complex, containing multiple copies of TatA, TatB and TatC subunits, and a separate TatA complex, containing only TatA subunits. Substrates initially bind to the TatABC complex, which probably triggers association of the separate TatA complex to form the active translocon.

It is found in the cell inner membrane. Functionally, part of the twin-arginine translocation (Tat) system that transports large folded proteins containing a characteristic twin-arginine motif in their signal peptide across membranes. TatA could form the protein-conducting channel of the Tat system. This is Sec-independent protein translocase protein TatA from Syntrophus aciditrophicus (strain SB).